We begin with the raw amino-acid sequence, 177 residues long: Peptide methionine sulfoxide reductase MsrA 2 (177 aa).

C12 is a catalytic residue.

It belongs to the MsrA Met sulfoxide reductase family.

It catalyses the reaction L-methionyl-[protein] + [thioredoxin]-disulfide + H2O = L-methionyl-(S)-S-oxide-[protein] + [thioredoxin]-dithiol. The catalysed reaction is [thioredoxin]-disulfide + L-methionine + H2O = L-methionine (S)-S-oxide + [thioredoxin]-dithiol. Its function is as follows. Has an important function as a repair enzyme for proteins that have been inactivated by oxidation. Catalyzes the reversible oxidation-reduction of methionine sulfoxide in proteins to methionine. The chain is Peptide methionine sulfoxide reductase MsrA 2 from Staphylococcus aureus (strain MRSA252).